The sequence spans 195 residues: Thymidine kinase (195 aa).

ATP-binding positions include 15–22 (GSMFSGKS) and 88–91 (DEVQ). Catalysis depends on E89, which acts as the Proton acceptor. Zn(2+) contacts are provided by C145, C148, C183, and C186.

The protein belongs to the thymidine kinase family. As to quaternary structure, homotetramer.

Its subcellular location is the cytoplasm. The enzyme catalyses thymidine + ATP = dTMP + ADP + H(+). The sequence is that of Thymidine kinase from Bacillus cereus (strain 03BB102).